The chain runs to 348 residues: Spore development regulator vosA (348 aa).

Residues 46-244 (ALSPSSCFLS…SDQGVRLRLR (199 aa)) form the Velvet domain. Residues 250–294 (MMSNKRSISGSGDLTSDQSQQQQQQQPLAKKRREDSVESANPSSL) form a disordered region. Residues 253–266 (NKRSISGSGDLTSD) show a composition bias toward polar residues. Residues 274 to 280 (QQPLAKK) carry the Nuclear localization signal motif.

Belongs to the velvet family. VosA subfamily. Forms a heterodimeric complex with VEL2; the formation of the VEL2-VOS1 complex is light-dependent.

It localises to the nucleus. Component of the velB-VosA heterodimeric complex that plays a dual role in activating genes associated with spore maturation and repressing certain development-associated genes. The complex binds DNA through the DNA-binding domain of vosA that recognizes an 11-nucleotide consensus sequence 5'-CTGGCCGCGGC-3' consisting of two motifs in the promoters of key developmental regulatory genes. Regulates spore viability, trehalose accumulation, and tolerance to thermal and oxidative as well as ion stresses. Positively regulates conidial pigmentation and pathogenicity on barley. This is Spore development regulator vosA from Cochliobolus sativus (strain ND90Pr / ATCC 201652) (Common root rot and spot blotch fungus).